Consider the following 508-residue polypeptide: Photosystem II CP47 reaction center protein (508 aa).

Helical transmembrane passes span A21 to S36, I101 to W115, G140 to F156, I203 to S218, V237 to V252, and C457 to R472.

It belongs to the PsbB/PsbC family. PsbB subfamily. As to quaternary structure, PSII is composed of 1 copy each of membrane proteins PsbA, PsbB, PsbC, PsbD, PsbE, PsbF, PsbH, PsbI, PsbJ, PsbK, PsbL, PsbM, PsbT, PsbX, PsbY, PsbZ, Psb30/Ycf12, at least 3 peripheral proteins of the oxygen-evolving complex and a large number of cofactors. It forms dimeric complexes. Binds multiple chlorophylls. PSII binds additional chlorophylls, carotenoids and specific lipids. is required as a cofactor.

The protein localises to the plastid. The protein resides in the chloroplast thylakoid membrane. Functionally, one of the components of the core complex of photosystem II (PSII). It binds chlorophyll and helps catalyze the primary light-induced photochemical processes of PSII. PSII is a light-driven water:plastoquinone oxidoreductase, using light energy to abstract electrons from H(2)O, generating O(2) and a proton gradient subsequently used for ATP formation. In Zygnema circumcarinatum (Green alga), this protein is Photosystem II CP47 reaction center protein.